Reading from the N-terminus, the 150-residue chain is Transthyretin (150 aa).

The N-terminal stretch at 1–20 is a signal peptide; it reads MAFHSTLLVFLAGLVFLSEA. Position 33 is a sulfocysteine (Cys-33). Positions 38, 77, and 140 each coordinate L-thyroxine.

The protein belongs to the transthyretin family. As to quaternary structure, homotetramer. Dimer of dimers. In the homotetramer, subunits assemble around a central channel that can accommodate two ligand molecules. In terms of processing, sulfonation of the reactive cysteine Cys-33 enhances the stability of the native conformation of TTR, avoiding misassembly of the protein leading to amyloid formation. Detected in serum (at protein level). Detected in liver and choroid plexus.

It localises to the secreted. Its function is as follows. Thyroid hormone-binding protein. Probably transports thyroxine from the bloodstream to the brain. The polypeptide is Transthyretin (TTR) (Gallus gallus (Chicken)).